We begin with the raw amino-acid sequence, 117 residues long: MAAPLGTGARAEDSGQEKQDSQEKETVIPERAEEAKLKAKYPNLGQKPGGSDFLMKRLQKGQKYFDSGDYNMAKAKMKNKQLPTAGPDKNLVTGDHIPKPQDLPQRKSSLVASKLAG.

Residues 1 to 53 (MAAPLGTGARAEDSGQEKQDSQEKETVIPERAEEAKLKAKYPNLGQKPGGSDF) are disordered. Basic and acidic residues predominate over residues 10–37 (RAEDSGQEKQDSQEKETVIPERAEEAKL). Ser-67 carries the phosphoserine; by GWL modification. Residues 76–117 (KMKNKQLPTAGPDKNLVTGDHIPKPQDLPQRKSSLVASKLAG) form a disordered region.

The protein belongs to the endosulfine family. In terms of processing, phosphorylation at Ser-67 by GWL during mitosis is essential for interaction with PPP2R2D (PR55-delta) and subsequent inactivation of PP2A.

The protein localises to the cytoplasm. In terms of biological role, protein phosphatase inhibitor that specifically inhibits protein phosphatase 2A (PP2A) during mitosis. When phosphorylated at Ser-67 during mitosis, specifically interacts with PPP2R2D (PR55-delta) and inhibits its activity, leading to inactivation of PP2A, an essential condition to keep cyclin-B1-CDK1 activity high during M phase. In Gallus gallus (Chicken), this protein is Alpha-endosulfine (ENSA).